Here is a 126-residue protein sequence, read N- to C-terminus: Holo-[acyl-carrier-protein] synthase (126 aa).

Mg(2+) contacts are provided by Asp9 and Glu58.

This sequence belongs to the P-Pant transferase superfamily. AcpS family. The cofactor is Mg(2+).

The protein resides in the cytoplasm. It catalyses the reaction apo-[ACP] + CoA = holo-[ACP] + adenosine 3',5'-bisphosphate + H(+). Functionally, transfers the 4'-phosphopantetheine moiety from coenzyme A to a Ser of acyl-carrier-protein. The polypeptide is Holo-[acyl-carrier-protein] synthase (Vibrio vulnificus (strain CMCP6)).